The following is a 405-amino-acid chain: MERLQKQPLTSPGSVSSSRDSSVPGSPSSIVAKMDNQVLGYKDLAAIPKDKAILDIERPDLMIYEPHFTYSLLEHVELPRSRECSLSPKSTSPPPSPEVWAESRTLGIISQASTPRTTGTPRTSLPHFHHPETTRPDSNIYKKPPIYKQRESVGGSPQSKHLIEDLIIESSKFPAAQPPDPNQPAKIETDYWPCPPSLAVVETEWRKRKASRKGAEEEEEEEDDDSEEEIKAIRERQKEELSKVTSNLGKMILKEEMEKSLPIRRKTRSLPDRTPFHTSLHSGTSKSSSLPSYGRTTLSRLQSTEFSPSGSEAGSPGLQNGEGQRGRMDRGNSLPCVLEQKIYPYEMLVVTNKGRTKLPPGVDRMRLERHLSAEDFSRVFAMSPEEFGKLALWKRNELKKKASLF.

Disordered regions lie at residues 1-29 (MERL…SPSS), 81-100 (SREC…PEVW), and 108-332 (IISQ…DRGN). Low complexity predominate over residues 11 to 29 (SPGSVSSSRDSSVPGSPSS). Phosphoserine occurs at positions 16, 18, 26, 92, 96, 110, and 113. Residues 113 to 124 (STPRTTGTPRTS) show a composition bias toward low complexity. Residue threonine 114 is modified to Phosphothreonine. A phosphoserine mark is found at serine 156 and serine 226. Over residues 216–228 (EEEEEEEDDDSEE) the composition is skewed to acidic residues. Residues 224–308 (DDSEEEIKAI…SRLQSTEFSP (85 aa)) are interaction with RASGRF2. Composition is skewed to basic and acidic residues over residues 229-242 (EIKA…EELS) and 252-261 (ILKEEMEKSL). A phosphoserine mark is found at serine 269, serine 279, serine 289, serine 303, serine 315, serine 333, serine 372, and serine 383. Low complexity predominate over residues 277 to 292 (HTSLHSGTSKSSSLPS). Positions 294–322 (GRTTLSRLQSTEFSPSGSEAGSPGLQNGE) are enriched in polar residues. One can recognise an HP domain in the interval 337-405 (VLEQKIYPYE…NELKKKASLF (69 aa)). Residue serine 403 is modified to Phosphoserine; by PKA.

The protein belongs to the villin/gelsolin family. In terms of assembly, monomeric (isoform 2); under reducing conditions. Self-associates. Exists under oxidizing condition as a trimer of two isoforms 2 and isoform 1 linked by disulfide bonds. Found in a complex with DMTN, F-actin and spectrin. Found in a complex with ADD2, DMTN and SLC2A1. Interacts with F-actin, ITPKB and spectrin. Isoform 2 interacts with SLC2A1 (via C-terminus cytoplasmic region). Interacts with RASGRF2. Phosphorylated. Phosphorylation at Ser-403 by PKA causes the C-terminal headpiece domain to associate with the N-terminal core domain, and leads to the inhibition of its actin bundling activity. As to expression, expressed in platelets. Isoform 1 and isoform 2 are expressed in mature erythrocytes (at protein level).

The protein resides in the cytoplasm. It is found in the cytosol. Its subcellular location is the perinuclear region. It localises to the cytoskeleton. The protein localises to the cell membrane. The protein resides in the membrane. It is found in the endomembrane system. Its subcellular location is the cell projection. Functionally, membrane-cytoskeleton-associated protein with F-actin-binding activity that induces F-actin bundles formation and stabilization. Its F-actin-bundling activity is reversibly regulated upon its phosphorylation by the cAMP-dependent protein kinase A (PKA). Binds to the erythrocyte membrane glucose transporter-1 SLC2A1/GLUT1, and hence stabilizes and attaches the spectrin-actin network to the erythrocytic plasma membrane. Plays a role in maintaining the functional integrity of PKA-activated erythrocyte shape and the membrane mechanical properties. Also plays a role as a modulator of actin dynamics in fibroblasts; acts as a negative regulator of the RhoA activation pathway. In platelets, functions as a regulator of internal calcium mobilization across the dense tubular system that affects platelet granule secretion pathways and aggregation. Also required for the formation of a diverse set of cell protrusions, such as filopodia and lamellipodia, necessary for platelet cell spreading, motility and migration. Acts as a tumor suppressor and inhibits malignant cell transformation. The sequence is that of Dematin (Dmtn) from Mus musculus (Mouse).